Consider the following 250-residue polypeptide: Probable transcriptional regulatory protein Ppha_0657 (250 aa).

It belongs to the TACO1 family.

Its subcellular location is the cytoplasm. This is Probable transcriptional regulatory protein Ppha_0657 from Pelodictyon phaeoclathratiforme (strain DSM 5477 / BU-1).